The following is a 975-amino-acid chain: Synaptopodin 2-like protein (975 aa).

The 80-residue stretch at 6-85 (EVQVTLAGGA…QLVLTVRRVT (80 aa)) folds into the PDZ domain. 3 disordered regions span residues 18 to 41 (GFRLQGGTEQRKPLQIRRRSQAGR), 86 to 214 (DEGS…PAEA), and 314 to 349 (AGTGTEEEDGIPPTSESELDEETFSDARSLTNQSDW). Phosphoserine occurs at positions 105 and 108. T138 is modified (phosphothreonine). Phosphoserine is present on residues S140, S163, S175, and S177. Polar residues predominate over residues 187-200 (GSPSQGDSRVSSPS). Positions 202-214 (EEGAALQPPPAEA) are enriched in low complexity. Positions 339–349 (DARSLTNQSDW) are enriched in polar residues. Phosphoserine is present on residues S342, S347, S371, S378, and S381. An omega-N-methylarginine mark is found at R383, R463, R466, and R476. Residues 491-649 (KVNEGLGSTS…ETKNSPNPEL (159 aa)) form a disordered region. The segment covering 502–516 (APSPFAAPPQGPTPL) has biased composition (pro residues). Positions 519–528 (FTTVVPSHTP) are enriched in polar residues. Low complexity-rich tracts occupy residues 530 to 540 (SGASSSTQRSS) and 571 to 580 (SAAAMTSTAS). Phosphoserine is present on residues S667 and S675. Residues 687–731 (LGGRSYKTLPQVSPKTPPPMAPKTPPPTTPKTPPPVAPKPGSRGL) are disordered. Positions 701-724 (KTPPPMAPKTPPPTTPKTPPPVAP) are enriched in pro residues. 2 positions are modified to phosphothreonine: T702 and T710. The residue at position 754 (R754) is an Omega-N-methylarginine. Residues 772 to 797 (EATSGSSLNPGLRPRSPSPTPSLPPS) form a disordered region. Phosphoserine is present on residues S787 and S789. A Phosphothreonine modification is found at T791. Omega-N-methylarginine occurs at positions 805, 825, and 888. S890 is modified (phosphoserine). A phosphothreonine mark is found at T891 and T897. The residue at position 909 (R909) is an Omega-N-methylarginine. The residue at position 920 (R920) is an Asymmetric dimethylarginine; alternate. At R920 the chain carries Omega-N-methylarginine; alternate. Omega-N-methylarginine is present on residues R953 and R955.

Belongs to the synaptopodin family.

It is found in the cytoplasm. It localises to the cytoskeleton. Its function is as follows. Actin-associated protein that may play a role in modulating actin-based shape. In Mus musculus (Mouse), this protein is Synaptopodin 2-like protein (Synpo2l).